The chain runs to 87 residues: Large ribosomal subunit protein bL31B (87 aa).

Belongs to the bacterial ribosomal protein bL31 family. Type B subfamily. In terms of assembly, part of the 50S ribosomal subunit.

This Latilactobacillus sakei subsp. sakei (strain 23K) (Lactobacillus sakei subsp. sakei) protein is Large ribosomal subunit protein bL31B.